A 791-amino-acid chain; its full sequence is Probable potassium transporter 11 (791 aa).

Residues 1–49 are Cytoplasmic-facing; the sequence is MASLSESEGTNRGSMWELDQNLDQPMDEEASRLKNMYREKKFSSLLLLR. The chain crosses the membrane as a helical span at residues 50–70; the sequence is LAFQSLGVVFGDLGTSPLYVF. Residues 71-87 lie on the Extracellular side of the membrane; that stretch reads YNAFPHGVDDEEDVIGA. The helical transmembrane segment at 88-108 threads the bilayer; it reads LSLIIYTLTLIPLLKYVFVVL. The Cytoplasmic portion of the chain corresponds to 109-175; it reads RANDNGQGGT…EAHAYKRNCL (67 aa). A helical membrane pass occupies residues 176 to 196; it reads LIVVLIGTCTAIGDGILTPAI. Topologically, residues 197-215 are extracellular; it reads SVLSASGGIKVQNPNMSTD. Asparagine 211 carries an N-linked (GlcNAc...) asparagine glycan. The chain crosses the membrane as a helical span at residues 216 to 236; that stretch reads VVVIVSVIILIGLFSMQHYGT. The Cytoplasmic portion of the chain corresponds to 237-238; it reads DK. A helical transmembrane segment spans residues 239 to 259; that stretch reads VGWLFAPIVLLWFILIGSVGA. Over 260 to 289 the chain is Extracellular; that stretch reads LNIHKYKGSVLKAYNPVYIYRYFQRRNSDS. The chain crosses the membrane as a helical span at residues 290–310; that stretch reads WASLGGIMLSITGTEALFADL. At 311–315 the chain is on the cytoplasmic side; sequence CHFPV. A helical transmembrane segment spans residues 316 to 338; sequence FAIQIAFTLIVFPCLLLAYTGQA. Over 339–359 the chain is Extracellular; sequence AYIIAHKDHVADAFYRSIPDS. Residues 360 to 380 form a helical membrane-spanning segment; the sequence is IYWPAFVIATAAAIVASQATI. Over 381 to 411 the chain is Cytoplasmic; that stretch reads SATYSIIKQALALGCFPRVKIVHTSKKFLGQ. The chain crosses the membrane as a helical span at residues 412-432; sequence IYIPDINWVLLILCIAVTAGF. Topologically, residues 433–444 are extracellular; the sequence is KNQSQIGNAYGT. A glycan (N-linked (GlcNAc...) asparagine) is linked at asparagine 434. Residues 445–465 traverse the membrane as a helical segment; that stretch reads AVVIVMLVTTFLMVPIMLLVW. The Cytoplasmic segment spans residues 466–468; it reads KSH. Residues 469–489 form a helical membrane-spanning segment; the sequence is WILVVTFIVLSLMVEIPYFSA. Topologically, residues 490 to 496 are extracellular; it reads CLLKIDQ. The helical transmembrane segment at 497–517 threads the bilayer; the sequence is GGWVPLVIATAFFIIMYVWHF. Residues 518 to 791 are Cytoplasmic-facing; that stretch reads CTVKRYEFEM…LLNVGQIYYI (274 aa).

Belongs to the HAK/KUP transporter (TC 2.A.72.3) family.

It localises to the membrane. Functionally, high-affinity potassium transporter. The sequence is that of Probable potassium transporter 11 from Oryza sativa subsp. japonica (Rice).